Reading from the N-terminus, the 358-residue chain is Alternative oxidase, mitochondrial (358 aa).

Residues 152–172 (LIRMVFLESVAGVPGMVAGML) traverse the membrane as a helical segment. Residues Glu159, Glu198, and His201 each coordinate Fe cation. A helical membrane pass occupies residues 217-237 (FMIIGAQGVFFNSMFLSYLIS). Glu249, Glu250, Glu306, and His309 together coordinate Fe cation.

This sequence belongs to the alternative oxidase family. Requires Fe cation as cofactor.

The protein resides in the mitochondrion inner membrane. Catalyzes cyanide-resistant oxygen consumption. May increase respiration when the cytochrome respiratory pathway is restricted, or in response to low temperatures. In Blumeria graminis (Powdery mildew), this protein is Alternative oxidase, mitochondrial.